The primary structure comprises 295 residues: Virginiamycin B lyase (295 aa).

His-227 serves as a coordination point for substrate. Residue Glu-267 participates in Mg(2+) binding. The active-site Proton acceptor is His-269. Glu-284 is a binding site for Mg(2+).

This sequence belongs to the Vgb family. As to quaternary structure, monomer. Mg(2+) is required as a cofactor.

Functionally, inactivates the type B streptogramin antibiotics by linearizing the lactone ring at the ester linkage, generating a free phenylglycine carboxylate and converting the threonyl moiety into 2-amino-butenoic acid. This chain is Virginiamycin B lyase, found in Bacillus licheniformis (strain ATCC 14580 / DSM 13 / JCM 2505 / CCUG 7422 / NBRC 12200 / NCIMB 9375 / NCTC 10341 / NRRL NRS-1264 / Gibson 46).